The chain runs to 254 residues: Large ribosomal subunit protein uL2 (254 aa).

It belongs to the universal ribosomal protein uL2 family.

In Candida glabrata (strain ATCC 2001 / BCRC 20586 / JCM 3761 / NBRC 0622 / NRRL Y-65 / CBS 138) (Yeast), this protein is Large ribosomal subunit protein uL2 (RPL2).